We begin with the raw amino-acid sequence, 570 residues long: Protein misato homolog 1 (570 aa).

At Ser-495 the chain carries Phosphoserine.

The protein belongs to the misato family. Present in all cell lines tested (at protein level). Widely expressed.

Its subcellular location is the mitochondrion outer membrane. It localises to the cytoplasm. Involved in the regulation of mitochondrial distribution and morphology. Required for mitochondrial fusion and mitochondrial network formation. The chain is Protein misato homolog 1 (MSTO1) from Homo sapiens (Human).